The sequence spans 2251 residues: MTSSLAAQLANVRSLNAERLTSSASLVKHTSYLFPPKTAAQQDLFTVHALGASGWTELSAENASLQRWSQSSLLFGDESRSMDRLMLPKEENDTIDKAVDEFLHLAAPFLLSKGASKCLEWLVRRFRVHEFSVEHVLAAFLPYHDTQQFARMLSICKLDGKPHLQFLLSVKKTASPLPAGVLHTAILAPATTTASLDLLRWISGLLANDVSYQLQVSPHRALVNFWTSTLVQICAARSRPDDNQQLAGLSKSTSNSKKSTKTRAADAQAILTILLPSAVRVAGTASLGQDAQMGGFMLLCTISQSFPLSKEAIQGVLTSLAKLLSTSHVVPAVNRALIACAFALCASPIATSDPLTTQSTSADRLIPDSLTAVLVSSTDASNCIGALAKSYDARAFLAHFIAALTARLSHAPSADLLSAILRGPAVQDNLCIQASELLLRLRLGASVGSSQAQDTAFEAHFVNDAVNEAHRNRLRVLQTVRNRKPHVFDTALHNCTRKHQSEAVIAAIWQTVQAVLAIESGIPLQDASQGKHDEQGRSDILWLSIHSADASQRCLALKQLFKDIKEGRALPQDTMVREALHARIQDSSIDVLQILYSQPAAVLNAFDARTLLTMIAEALDEGRIAVDRFTQHLSFLLNPYLKEHADANDQVARRAVWPHLLHSPSRLANASSAIKLLSQSSNTNGVLSLIASFAAKYEDPTHVNDAIARAVAAHLVSVSAEDRKDWVDFLTSTARPSQTTATASRDLALLSLIHLSDKIAGDDLVSLSETILRNVVLPSLTVLGAPTAEHLQQLSSLTLNDALTSLQHVKQLETLFKHAATEQSAILLVNHLLVQLVRRAEVPAFDTYLTSQVSPELQRAKTILTSLYSVINTAPLPTSLSKLLLRILLFKLGDSSLPFLASIWTNTSGSYTAAVRLAALRHADAYLQAQVQAISQQEARDFQVVVPLLLTALADAEAAIRLAAIACLAHILAICKYAGDLAKASKKKAKELDIFGYESFHGAATSDPMQYIDLVSLAPYLEQIIESKSAFRNDAALLPRLHGELLQIGRQDGRKEVGHKHAMVCFIVSHILCIDSLPSRLVLLQSLSRVSDAAKLEMLLPLIREVVEGNVATATNGLRNVEDRELYLELLFASYDRGCRDVVEQAASGAWPLYLKALEGRDGKRQVQKAAVRALDKAGLFATLSPIMRKESYLHLASVVADPSVPASPEVASALRELKVDSAILIAVLSELREAITSKALSGPESKRARTSLSSDETMKRTCAILAAVLESAVGSRLMCTPALLYELFEVLRVAVDLHSGLLATNGEHMMQLAMSCIEKLVGSLPKSAATIPAEIAQALRADTIVSVIKSSNNPQTFQHALLLLSKIASIAPETVLHNVMPIFTFVGSTVLQRDDAFSFSVVEKVLQSIVPALVNSFRASDAAKKSKFALLCEARAFVRIFTDAAAHVPRHRRQTFFRLLVDILGADDFAAAVAMLLVDRSAHKIVKQSRSDAEQTLQLPLAVVSPHSAMVQVRVLHQVWEEVLRIWANRDETESLSELVFLDRAGRLDKEHVDHESEPLRQIQALIMLIRQVLVSKAFADQMGKVASNQIGEELETFIRLALETVASVRSSQPTIAGLALEVLDAAMPFAPVDNVLAVVSGLVEGQDVAHRTSGFSLFASRVGAMSPTSTDRAAVAAYTPTIVKEAIEVIATSLATPPAGADAESLRQAALDALKTVSSSAQTAEHATLASALPTLIKLGKTSAESERVQRAVPWAARISVFSITRRLATKLGPRLIPHIAALVPFCLSVISRSASATVGSADAVQDESENEKGRAAAAGVNSNKAVLRTGALDTLTGLFGSVSTFMSSYVAQIIRMSISPELKKAMSSVSGSSTASERSLNLLVSTLIRKTVANQLFEATFKVWDQELAVAENDDAVERLVGISEFLGRALRQSDREAISATYKLVYRFLLRALDLGRINVAGNGKLSRASIARIETSLVSLPFMRMVLKLNEASFRPLFMRMFDWAVLDLVDGDEVDVHSEETDAIVARQVVLFKTFNALSETLRSLVSSYYAVLLDQVIELLSTWSKLAARATVAHQSMQRELWNEVMRSIQLSAKHDEGIFWNPSRVAKIIGPILDQMNLLNASWNDKKRFIEAEEFVGAVAPVVVGLLNNVNDQATLKLFNSSLLQRASATRATNSSLIRSTATQLLTHMWAAQNDQLLALVPETIAQLSELLEDDHQPIVAYANQFRSHIEAALGESLESYLT.

An HEAT repeat occupies 945-983; the sequence is VVPLLLTALADAEAAIRLAAIACLAHILAICKYAGDLAK. A run of 2 helical transmembrane segments spans residues 962-982 and 1460-1480; these read LAAIACLAHILAICKYAGDLA and LLVDILGADDFAAAVAMLLVD.

Belongs to the HEATR1/UTP10 family. In terms of assembly, component of the ribosomal small subunit (SSU) processome.

It localises to the nucleus. The protein localises to the nucleolus. It is found in the membrane. Its function is as follows. Involved in nucleolar processing of pre-18S ribosomal RNA. Involved in ribosome biosynthesis. This Mycosarcoma maydis (Corn smut fungus) protein is U3 small nucleolar RNA-associated protein 10.